We begin with the raw amino-acid sequence, 287 residues long: Large ribosomal subunit protein uL2 (287 aa).

Residues 221–287 (RGSVMNPCDH…SKRSRGGRDS (67 aa)) form a disordered region. Positions 258 to 287 (KTRKKNKPSNKLVVRRRRRISKRSRGGRDS) are enriched in basic residues.

The protein belongs to the universal ribosomal protein uL2 family. In terms of assembly, part of the 50S ribosomal subunit. Forms a bridge to the 30S subunit in the 70S ribosome.

Its function is as follows. One of the primary rRNA binding proteins. Required for association of the 30S and 50S subunits to form the 70S ribosome, for tRNA binding and peptide bond formation. It has been suggested to have peptidyltransferase activity; this is somewhat controversial. Makes several contacts with the 16S rRNA in the 70S ribosome. In Prochlorococcus marinus subsp. pastoris (strain CCMP1986 / NIES-2087 / MED4), this protein is Large ribosomal subunit protein uL2.